Consider the following 320-residue polypeptide: Acetyl-coenzyme A carboxylase carboxyl transferase subunit beta (320 aa).

The 270-residue stretch at 25 to 294 folds into the CoA carboxyltransferase N-terminal domain; it reads LWRKCPECGT…AIVGDLPAPD (270 aa). Zn(2+) is bound by residues Cys29, Cys32, Cys48, and Cys51. Residues 29-51 form a C4-type zinc finger; sequence CPECGTMLFHRELSDNLFVCISC. The tract at residues 290 to 320 is disordered; it reads LPAPDPAPATPEPQKAAPSAPAQDKPGAGRS.

This sequence belongs to the AccD/PCCB family. As to quaternary structure, acetyl-CoA carboxylase is a heterohexamer composed of biotin carboxyl carrier protein (AccB), biotin carboxylase (AccC) and two subunits each of ACCase subunit alpha (AccA) and ACCase subunit beta (AccD). Zn(2+) serves as cofactor.

It is found in the cytoplasm. The enzyme catalyses N(6)-carboxybiotinyl-L-lysyl-[protein] + acetyl-CoA = N(6)-biotinyl-L-lysyl-[protein] + malonyl-CoA. It participates in lipid metabolism; malonyl-CoA biosynthesis; malonyl-CoA from acetyl-CoA: step 1/1. Component of the acetyl coenzyme A carboxylase (ACC) complex. Biotin carboxylase (BC) catalyzes the carboxylation of biotin on its carrier protein (BCCP) and then the CO(2) group is transferred by the transcarboxylase to acetyl-CoA to form malonyl-CoA. The sequence is that of Acetyl-coenzyme A carboxylase carboxyl transferase subunit beta from Dinoroseobacter shibae (strain DSM 16493 / NCIMB 14021 / DFL 12).